A 492-amino-acid chain; its full sequence is Prostaglandin E2 receptor EP4 subtype (492 aa).

Residues 1–19 (MSIPGTNASSSQASNPLNS) lie on the Extracellular side of the membrane. N-linked (GlcNAc...) asparagine glycosylation occurs at N7. A helical membrane pass occupies residues 20–43 (PVTIPAVMFIFGVVGNLVAIVVLC). Residues 44-55 (KSRKEQKETTFY) lie on the Cytoplasmic side of the membrane. A helical membrane pass occupies residues 56 to 79 (TLVCGLAVTDLLGTLLVSPVTIAT). The Extracellular segment spans residues 80–96 (YLKGQWPGGHALCEYST). An intrachain disulfide couples C92 to C170. The helical transmembrane segment at 97–115 (FILLFFGLSGLSIICAMSI) threads the bilayer. Over 116-135 (ERYLAINHAYFYSHYVDKRL) the chain is Cytoplasmic. The chain crosses the membrane as a helical span at residues 136–160 (AGLTLFAVYASNVLFCALPSMGLGS). The Extracellular segment spans residues 161 to 184 (SRLQYPATWCFIDWTTNVTAHAAF). A helical membrane pass occupies residues 185 to 211 (SYMYAGFSSFLILATVLCNVLVCGALL). Residues 212–273 (RMHRQFMRRT…RSFRRIAGAE (62 aa)) lie on the Cytoplasmic side of the membrane. The helical transmembrane segment at 274 to 301 (IQMVILLIATSLVVLICSIPLVVRVFVN) threads the bilayer. Over 302 to 318 (QLYRPQLEPVIGKNPDL) the chain is Extracellular. The helical transmembrane segment at 319 to 338 (QAIRIASVSPILDPWIYILL) threads the bilayer. Over 339–492 (RKTVLSKAIE…ETLNLSEKCI (154 aa)) the chain is Cytoplasmic. The segment covering 361 to 374 (RRERSGPHCSDSRR) has biased composition (basic and acidic residues). The disordered stretch occupies residues 361–383 (RRERSGPHCSDSRRTSSAVSGHS). Residues S380, S383, S385, and S388 each carry the phosphoserine modification.

Belongs to the G-protein coupled receptor 1 family. Interacts with FEM1A. Post-translationally, phosphorylation mediates agonist-mediated desensitization by promoting cytoplasmic retention.

The protein resides in the cell membrane. In terms of biological role, receptor for prostaglandin E2 (PGE2). The activity of this receptor is mediated by G(s) proteins that stimulate adenylate cyclase. Has a relaxing effect on smooth muscle. May play an important role in regulating renal hemodynamics, intestinal epithelial transport, adrenal aldosterone secretion, and uterine function. The polypeptide is Prostaglandin E2 receptor EP4 subtype (PTGER4) (Bos taurus (Bovine)).